A 984-amino-acid polypeptide reads, in one-letter code: Putative formate dehydrogenase SA2102 (984 aa).

Residues 3-79 enclose the 2Fe-2S ferredoxin-type domain; sequence EHLVVTLDGK…PMTVNTVNND (77 aa). [2Fe-2S] cluster contacts are provided by Cys-37, Cys-48, Cys-51, and Cys-63. The 41-residue stretch at 79–119 folds into the 4Fe-4S His(Cys)3-ligated-type domain; that stretch reads DVKDAQKEALDRILEKHMLYCTVCDYNNGDCEIHNTMDAWG. [4Fe-4S] cluster contacts are provided by His-95, Cys-99, Cys-102, Cys-109, Cys-147, Cys-150, Cys-153, Cys-157, Cys-190, Cys-193, Cys-196, Cys-200, Cys-264, Cys-267, Cys-271, and Cys-299. 4Fe-4S ferredoxin-type domains are found at residues 138 to 165 and 181 to 211; these read PFYRYDPNQCILCGRCVEACQDIEVNET and NDVPINESSCVSCGQCATVCPCNAMMEVNME. Residues 252–984 form a formate dehydrogenase region; sequence MRKERIKKTK…YVFPGNQVDK (733 aa). Positions 257-313 constitute a 4Fe-4S Mo/W bis-MGD-type domain; that stretch reads IKKTKTVCTYCGVGCSFEVWTKDREILKVQPSHDSPANKIATCVKGKFSWGHINSDQ.

The protein in the C-terminal section; belongs to the prokaryotic molybdopterin-containing oxidoreductase family. [2Fe-2S] cluster is required as a cofactor. [4Fe-4S] cluster serves as cofactor. The cofactor is Mo-bis(molybdopterin guanine dinucleotide).

It carries out the reaction formate + NAD(+) = CO2 + NADH. This Staphylococcus aureus (strain N315) protein is Putative formate dehydrogenase SA2102.